Here is a 113-residue protein sequence, read N- to C-terminus: U11-theraphotoxin-Hhn1r (113 aa).

An N-terminal signal peptide occupies residues 1–21; it reads MNTVRVTFLLVFVLAVSLGQA. A propeptide spanning residues 22 to 74 is cleaved from the precursor; sequence DKDENRMEMQEKTEQGKSYLDFAENLLLQKLEELEAKLLEEDSEESRNSRQKR. Positions 61–83 are disordered; sequence EEDSEESRNSRQKRCIGEGVPCD. Intrachain disulfides connect Cys-75-Cys-90, Cys-82-Cys-95, and Cys-89-Cys-110.

It belongs to the neurotoxin 14 (magi-1) family. 01 (HNTX-16) subfamily. As to expression, expressed by the venom gland.

It localises to the secreted. In terms of biological role, probable ion channel inhibitor. This is U11-theraphotoxin-Hhn1r from Cyriopagopus hainanus (Chinese bird spider).